The sequence spans 216 residues: Uracil-DNA glycosylase (216 aa).

The active-site Proton acceptor is D59.

This sequence belongs to the uracil-DNA glycosylase (UDG) superfamily. UNG family.

Its subcellular location is the cytoplasm. The catalysed reaction is Hydrolyzes single-stranded DNA or mismatched double-stranded DNA and polynucleotides, releasing free uracil.. Functionally, excises uracil residues from the DNA which can arise as a result of misincorporation of dUMP residues by DNA polymerase or due to deamination of cytosine. The protein is Uracil-DNA glycosylase of Staphylococcus epidermidis (strain ATCC 35984 / DSM 28319 / BCRC 17069 / CCUG 31568 / BM 3577 / RP62A).